Here is a 95-residue protein sequence, read N- to C-terminus: Protein TusB (95 aa).

It belongs to the DsrH/TusB family. In terms of assembly, heterohexamer, formed by a dimer of trimers. The hexameric TusBCD complex contains 2 copies each of TusB, TusC and TusD. The TusBCD complex interacts with TusE.

It is found in the cytoplasm. In terms of biological role, part of a sulfur-relay system required for 2-thiolation of 5-methylaminomethyl-2-thiouridine (mnm(5)s(2)U) at tRNA wobble positions. This chain is Protein TusB, found in Escherichia coli O45:K1 (strain S88 / ExPEC).